The following is a 211-amino-acid chain: Riboflavin transporter RibU (211 aa).

The next 5 membrane-spanning stretches (helical) occupy residues 34–54, 66–86, 104–124, 134–154, and 180–200; these read AYIA…FPLI, ILPV…GVLL, IGLP…SYFW, ILGS…LNYI, and AMVV…FALI.

This sequence belongs to the prokaryotic riboflavin transporter (P-RFT) (TC 2.A.87) family. As to quaternary structure, forms a stable energy-coupling factor (ECF) transporter complex composed of 2 membrane-embedded substrate-binding proteins (S component), 2 ATP-binding proteins (A component) and 2 transmembrane proteins (T component) upon coexpression of the 4 components in E.coli.

It is found in the cell membrane. Its function is as follows. Substrate-binding (S) component of an energy-coupling factor (ECF) ABC-transporter complex. Mediates riboflavin uptake, may also transport FMN and roseoflavin. Probably a riboflavin-binding protein that interacts with the energy-coupling factor (ECF) ABC-transporter complex. Unlike classic ABC transporters this ECF transporter provides the energy necessary to transport a number of different substrates. The substrates themselves are bound by transmembrane, not extracytoplasmic soluble proteins. Expression of the complex plus RibU in E.coli allows riboflavin uptake. The polypeptide is Riboflavin transporter RibU (ribU) (Streptococcus thermophilus (strain ATCC BAA-250 / LMG 18311)).